Consider the following 77-residue polypeptide: Small ribosomal subunit protein uS17 (77 aa).

It belongs to the universal ribosomal protein uS17 family. Part of the 30S ribosomal subunit.

Its function is as follows. One of the primary rRNA binding proteins, it binds specifically to the 5'-end of 16S ribosomal RNA. This Rickettsia bellii (strain OSU 85-389) protein is Small ribosomal subunit protein uS17.